Reading from the N-terminus, the 147-residue chain is Protein MioC homolog (147 aa).

A Flavodoxin-like domain is found at 5–144 (ICIITGSTLG…TAEQWLPQFL (140 aa)).

This sequence belongs to the flavodoxin family. MioC subfamily. Requires FMN as cofactor.

In terms of biological role, probable electron transporter required for biotin synthase activity. This chain is Protein MioC homolog (mioC), found in Pasteurella multocida (strain Pm70).